Reading from the N-terminus, the 904-residue chain is Anoctamin-5 (904 aa).

Over Met-1 to Lys-290 the chain is Cytoplasmic. Residues Ile-291–Val-311 traverse the membrane as a helical segment. At Gly-312–Asn-371 the chain is on the extracellular side. N-linked (GlcNAc...) asparagine glycans are attached at residues Asn-326, Asn-357, and Asn-371. A helical transmembrane segment spans residues Glu-372–Trp-392. Residues Lys-393–Ser-453 are Cytoplasmic-facing. The chain crosses the membrane as a helical span at residues Gly-454–Tyr-474. Over Arg-475–Gln-502 the chain is Extracellular. A helical membrane pass occupies residues Leu-503 to Phe-523. Residues Tyr-524 to Thr-548 are Cytoplasmic-facing. A helical transmembrane segment spans residues Leu-549 to Phe-569. Residues Lys-570–Thr-667 are Extracellular-facing. The chain crosses the membrane as a helical span at residues Val-668–Ala-688. Residues Leu-689–Asp-723 lie on the Cytoplasmic side of the membrane. Residues Ile-724–Ser-744 form a helical membrane-spanning segment. The Extracellular segment spans residues Asp-745 to Thr-825. 3 N-linked (GlcNAc...) asparagine glycosylation sites follow: Asn-759, Asn-769, and Asn-782. Residues Phe-826–Pro-846 form a helical membrane-spanning segment. Residues Asp-847–Val-904 are Cytoplasmic-facing.

Belongs to the anoctamin family. In terms of tissue distribution, highly expressed in skeletal muscle, bone tissues and thyroid gland.

The protein resides in the endoplasmic reticulum membrane. Its subcellular location is the cell membrane. In terms of biological role, plays a role in plasma membrane repair in a process involving annexins. Does not exhibit calcium-activated chloride channel (CaCC) activity. This Mus musculus (Mouse) protein is Anoctamin-5 (Ano5).